Reading from the N-terminus, the 163-residue chain is Lipoprotein signal peptidase (163 aa).

3 consecutive transmembrane segments (helical) span residues 4–24, 66–86, and 92–112; these read SAALFCRPVPAILFILSLLIL, LDAWVIVVMRLAIVAFVAWLW, and DHQFAHLGYCLIIAGAFGNII. Residues Asp-122 and Asp-140 contribute to the active site. A helical transmembrane segment spans residues 132 to 152; the sequence is SFAVFNLADSLITIGAGFILL.

It belongs to the peptidase A8 family.

It localises to the cell inner membrane. It carries out the reaction Release of signal peptides from bacterial membrane prolipoproteins. Hydrolyzes -Xaa-Yaa-Zaa-|-(S,diacylglyceryl)Cys-, in which Xaa is hydrophobic (preferably Leu), and Yaa (Ala or Ser) and Zaa (Gly or Ala) have small, neutral side chains.. It participates in protein modification; lipoprotein biosynthesis (signal peptide cleavage). Functionally, this protein specifically catalyzes the removal of signal peptides from prolipoproteins. In Allorhizobium ampelinum (strain ATCC BAA-846 / DSM 112012 / S4) (Agrobacterium vitis (strain S4)), this protein is Lipoprotein signal peptidase.